Here is a 171-residue protein sequence, read N- to C-terminus: 3-hydroxydecanoyl-[acyl-carrier-protein] dehydratase (171 aa).

The active site involves histidine 70.

This sequence belongs to the thioester dehydratase family. FabA subfamily. As to quaternary structure, homodimer.

The protein localises to the cytoplasm. It carries out the reaction a (3R)-hydroxyacyl-[ACP] = a (2E)-enoyl-[ACP] + H2O. The enzyme catalyses (3R)-hydroxydecanoyl-[ACP] = (2E)-decenoyl-[ACP] + H2O. It catalyses the reaction (2E)-decenoyl-[ACP] = (3Z)-decenoyl-[ACP]. It participates in lipid metabolism; fatty acid biosynthesis. Its function is as follows. Necessary for the introduction of cis unsaturation into fatty acids. Catalyzes the dehydration of (3R)-3-hydroxydecanoyl-ACP to E-(2)-decenoyl-ACP and then its isomerization to Z-(3)-decenoyl-ACP. Can catalyze the dehydratase reaction for beta-hydroxyacyl-ACPs with saturated chain lengths up to 16:0, being most active on intermediate chain length. This Xanthomonas axonopodis pv. citri (strain 306) protein is 3-hydroxydecanoyl-[acyl-carrier-protein] dehydratase.